Consider the following 438-residue polypeptide: Plasmalemma vesicle-associated protein (438 aa).

Over 1-26 (MGLSMDRSPYSRTGDRDRGCWYYLRY) the chain is Cytoplasmic. The chain crosses the membrane as a helical; Signal-anchor for type II membrane protein span at residues 27–47 (FFLFVSLIQFLIILGLVLFMI). The Extracellular portion of the chain corresponds to 48–438 (YGNVHATTES…LVNPAVPPSG (391 aa)). 4 N-linked (GlcNAc...) asparagine glycosylation sites follow: N82, N88, N112, and N150. Residues 289 to 383 (AGIERVTREN…TEVDVRISAL (95 aa)) adopt a coiled-coil conformation. Residues 393-438 (PAIQPRLPGPPPNPPPIDPASLEEFKKRILESQRPPLVNPAVPPSG) are disordered. Pro residues-rich tracts occupy residues 399-410 (LPGPPPNPPPID) and 429-438 (LVNPAVPPSG).

As to quaternary structure, homodimer. In terms of tissue distribution, expressed in lung (alveolar endothelial and bronchial epithelial cells), kidney (endothelium of peritubular capillaries), spleen, liver, adrenal (endothelial cells of the zona reticularis of the cortex and chromaffin cells in the medulla), pancreas (islets of Langerhans), testis (germ cells, interstitial cells in neonatal testis and spermatids), ovary (stromal endothelial, thecal layer of developing follicles, luteal cells within the corpus luteum), intestine (endothelium of capillaries of the intestinal villi) and pituitary (pituicyte cells in the neural lobe) (at protein level). Expressed in lung, kidney, spleen, liver, adrenal, testis, heart, muscle, pituitary, thyroid and ovary.

Its subcellular location is the cell membrane. The protein localises to the membrane. It localises to the caveola. The protein resides in the cytoplasm. It is found in the perinuclear region. Functionally, endothelial cell-specific membrane protein involved in the formation of the diaphragms that bridge endothelial fenestrae. It is also required for the formation of stomata of caveolae and transendothelial channels. Functions in microvascular permeability, endothelial fenestrae contributing to the passage of water and solutes and regulating transcellular versus paracellular flow in different organs. Plays a specific role in embryonic development. This chain is Plasmalemma vesicle-associated protein (Plvap), found in Rattus norvegicus (Rat).